Reading from the N-terminus, the 111-residue chain is Large ribosomal subunit protein uL24 (111 aa).

The protein belongs to the universal ribosomal protein uL24 family. In terms of assembly, part of the 50S ribosomal subunit.

In terms of biological role, one of two assembly initiator proteins, it binds directly to the 5'-end of the 23S rRNA, where it nucleates assembly of the 50S subunit. One of the proteins that surrounds the polypeptide exit tunnel on the outside of the subunit. The sequence is that of Large ribosomal subunit protein uL24 from Chlamydia pneumoniae (Chlamydophila pneumoniae).